The chain runs to 208 residues: MALYNPYRSDMVATLGETTGFVARQLMLYRMKQDPVGREILRLQPRVKSWTVDLNEMRSLQEGTFGREYARFMDDNGLDQDSRDDVKFVDDIELAYVMQRYRDIHDFTHTLTGLPTVSVAGEIAVKWFEMVQTGLPMCTLGSIFGPLNPEVTPKHREQLRSYYIPWALSNGMKAKFIMNVFYERHFEEPIDSLRKKMNLTPARRLDGW.

The Zn(2+) site is built by histidine 105, aspartate 106, histidine 109, and glutamate 122.

Belongs to the COQ4 family. As to quaternary structure, component of a multi-subunit COQ enzyme complex. Requires Zn(2+) as cofactor.

Its subcellular location is the mitochondrion inner membrane. The catalysed reaction is a 4-hydroxy-3-methoxy-5-(all-trans-polyprenyl)benzoate + H(+) = a 2-methoxy-6-(all-trans-polyprenyl)phenol + CO2. It participates in cofactor biosynthesis; ubiquinone biosynthesis. Its function is as follows. Lyase that catalyzes the C1-decarboxylation of 4-hydroxy-3-methoxy-5-(all-trans-polyprenyl)benzoic acid into 2-methoxy-6-(all-trans-polyprenyl)phenol during ubiquinone biosynthesis. This is Ubiquinone biosynthesis protein COQ4 homolog, mitochondrial from Nematostella vectensis (Starlet sea anemone).